A 210-amino-acid chain; its full sequence is Flagellar transcriptional regulator FlhC (210 aa).

Positions 144, 147, 164, and 167 each coordinate Zn(2+).

This sequence belongs to the FlhC family. Heterohexamer composed of two FlhC and four FlhD subunits. Each FlhC binds a FlhD dimer, forming a heterotrimer, and a hexamer assembles by dimerization of two heterotrimers. It depends on Zn(2+) as a cofactor.

It is found in the cytoplasm. In terms of biological role, functions in complex with FlhD as a master transcriptional regulator that regulates transcription of several flagellar and non-flagellar operons by binding to their promoter region. Activates expression of class 2 flagellar genes, including fliA, which is a flagellum-specific sigma factor that turns on the class 3 genes. Also regulates genes whose products function in a variety of physiological pathways. The polypeptide is Flagellar transcriptional regulator FlhC (Cupriavidus pinatubonensis (strain JMP 134 / LMG 1197) (Cupriavidus necator (strain JMP 134))).